A 129-amino-acid chain; its full sequence is Small ribosomal subunit protein uS11 (129 aa).

It belongs to the universal ribosomal protein uS11 family. As to quaternary structure, part of the 30S ribosomal subunit. Interacts with proteins S7 and S18. Binds to IF-3.

Its function is as follows. Located on the platform of the 30S subunit, it bridges several disparate RNA helices of the 16S rRNA. Forms part of the Shine-Dalgarno cleft in the 70S ribosome. The protein is Small ribosomal subunit protein uS11 of Jannaschia sp. (strain CCS1).